The chain runs to 170 residues: Lipoprotein signal peptidase (170 aa).

The next 3 helical transmembrane spans lie at 12 to 32, 67 to 87, and 94 to 113; these read WYWVVVLVFLADQLSKQWVLS, WQRWLFTFVAVGFSVLLSVWL, and MWRLNLAYTLVIGGALGNLI. Residues aspartate 123 and aspartate 141 contribute to the active site. A helical transmembrane segment spans residues 139 to 159; the sequence is IADSAICVGAGLIILDSFVAG.

It belongs to the peptidase A8 family.

The protein resides in the cell inner membrane. The enzyme catalyses Release of signal peptides from bacterial membrane prolipoproteins. Hydrolyzes -Xaa-Yaa-Zaa-|-(S,diacylglyceryl)Cys-, in which Xaa is hydrophobic (preferably Leu), and Yaa (Ala or Ser) and Zaa (Gly or Ala) have small, neutral side chains.. It functions in the pathway protein modification; lipoprotein biosynthesis (signal peptide cleavage). Functionally, this protein specifically catalyzes the removal of signal peptides from prolipoproteins. This Shewanella pealeana (strain ATCC 700345 / ANG-SQ1) protein is Lipoprotein signal peptidase.